The following is a 135-amino-acid chain: Endocuticle structural glycoprotein SgAbd-2 (135 aa).

Q1 bears the Pyrrolidone carboxylic acid mark. T11 and T100 each carry an O-linked (HexNAc...) threonine glycan. One can recognise a Chitin-binding type R&amp;R domain in the interval D32–P102.

In terms of biological role, component of the abdominal endocuticle. The protein is Endocuticle structural glycoprotein SgAbd-2 of Schistocerca gregaria (Desert locust).